The sequence spans 2049 residues: Non-reducing polyketide synthase hmp3 (2049 aa).

The N-terminal acylcarrier protein transacylase (SAT) domain stretch occupies residues 9 to 246; the sequence is LYFGDQTDSW…NELSIHALQH (238 aa). In terms of domain architecture, Ketosynthase family 3 (KS3) spans 365-793; that stretch reads PGRIAIVGMA…GGNASLILED (429 aa). Catalysis depends on for beta-ketoacyl synthase activity residues Cys-538, His-673, and His-712. Positions 887 to 1146 are malonyl-CoA:ACP transacylase (MAT) domain; the sequence is VFVFTGQGSH…VDFVGALGAL (260 aa). The For acyl/malonyl transferase activity role is filled by Ser-978. Residues 1265 to 1404 are N-terminal hotdog fold; the sequence is QQIVEESSSP…AQTLQTSWNR (140 aa). Residues 1265-1573 form the PKS/mFAS DH domain; that stretch reads QQIVEESSSP…FHEVSNNVLD (309 aa). The tract at residues 1269 to 1572 is product template (PT) domain; sequence EESSSPSLHV…SFHEVSNNVL (304 aa). Residues 1425–1573 are C-terminal hotdog fold; sequence GHRMLPSILY…FHEVSNNVLD (149 aa). The region spanning 1626 to 1704 is the Carrier domain; it reads SSESELFHTI…DLRNEFARSS (79 aa). Ser-1663 is modified (O-(pantetheine 4'-phosphoryl)serine). The segment at 1700–1747 is disordered; sequence FARSSTSTPPSKTFSEFSIVDATPESTRSSSRAPSEKKEPAPASEKSE. Low complexity predominate over residues 1703-1717; sequence SSTSTPPSKTFSEFS. A compositionally biased stretch (polar residues) spans 1723-1732; the sequence is PESTRSSSRA. Positions 1733-1747 are enriched in basic and acidic residues; that stretch reads PSEKKEPAPASEKSE. The tract at residues 1761-1951 is thioesterase (TE) domain; it reads SPLPSARITL…KRTAIIWAKK (191 aa).

It participates in secondary metabolite biosynthesis. Its function is as follows. Non-reducing polyketide synthase; part of the gene cluster that mediates the biosynthesis of hypothemycin, a resorcylic acid lactone (RAL) that irreversibly inhibits a subset of protein kinases with a conserved cysteine in the ATP binding site such as human ERK2. The first step is performed by both PKSs hmp3 and hmp8 and leads to the production of 7',8'-dehydrozearalenol (DHZ). The highly reducing PKS hpm8 synthesizes the reduced hexaketide (7S,11S,2E,8E)-7,11-dihydroxy-dodeca-2,8-dienoate, which is transferred downstream to the non-reducing PKS hpm3. Hpm3 then extends the reduced hexaketide to a nonaketide, after which regioselective cyclization and macrolactonization affords DHZ. The next step is the conversion of DHZ into aigialomycin C and is performed by the O-methyltransferase hmp5, the FAD-binding monooxygenase hmp7, and the cytochrome P450 monooxygenase hmp1. The wide substrate tolerance of the hmp5 and hmp7 implies that the reactions from DHZ to aigialomycin C can occur in any order. The steps from aigialomycin C to hypothemycin are less well established. The FAD-linked oxidoreductase hmp9 presumably catalyzes oxidation of the C-6' hydroxyl to a ketone. The timing of this oxidation is important, since the resulting enone functional group is a Michael acceptor that can react spontaneously with glutathione, an abundant metabolite in fungal cells. The glutathione S-transferase hmp2 catalyzes cis-trans isomerization of the 7',8' double bond with equilibrium favoring the trans isomer. The hpm6-encoded transporter might preferentially pump hypothemycin out of the cell relative to the trans isomer aigialomycin A. The cis-to-trans isomerization may be coupled with C-4' hydroxylation, since all known hypothemycin analogs containing the enone functional group also have hydroxyl groups at both C-4' and C-5'. The protein is Non-reducing polyketide synthase hmp3 of Hypomyces subiculosus (Nectria subiculosa).